The primary structure comprises 491 residues: Ketol-acid reductoisomerase (NADP(+)) (491 aa).

The KARI N-terminal Rossmann domain occupies I16 to S207. Residues C44–Q47, K67, S77, and D107–Q109 each bind NADP(+). The active site involves H131. NADP(+) is bound at residue G157. 2 consecutive KARI C-terminal knotted domains span residues S208–S344 and Y345–M484. 4 residues coordinate Mg(2+): D216, E220, E389, and E393. Substrate is bound at residue S414.

This sequence belongs to the ketol-acid reductoisomerase family. Mg(2+) is required as a cofactor.

It catalyses the reaction (2R)-2,3-dihydroxy-3-methylbutanoate + NADP(+) = (2S)-2-acetolactate + NADPH + H(+). The enzyme catalyses (2R,3R)-2,3-dihydroxy-3-methylpentanoate + NADP(+) = (S)-2-ethyl-2-hydroxy-3-oxobutanoate + NADPH + H(+). The protein operates within amino-acid biosynthesis; L-isoleucine biosynthesis; L-isoleucine from 2-oxobutanoate: step 2/4. It functions in the pathway amino-acid biosynthesis; L-valine biosynthesis; L-valine from pyruvate: step 2/4. Involved in the biosynthesis of branched-chain amino acids (BCAA). Catalyzes an alkyl-migration followed by a ketol-acid reduction of (S)-2-acetolactate (S2AL) to yield (R)-2,3-dihydroxy-isovalerate. In the isomerase reaction, S2AL is rearranged via a Mg-dependent methyl migration to produce 3-hydroxy-3-methyl-2-ketobutyrate (HMKB). In the reductase reaction, this 2-ketoacid undergoes a metal-dependent reduction by NADPH to yield (R)-2,3-dihydroxy-isovalerate. This is Ketol-acid reductoisomerase (NADP(+)) from Buchnera aphidicola subsp. Schizaphis graminum (strain Sg).